The sequence spans 1388 residues: MEDLMTSYSFTEKKRIRKDFGKQRSILEVPFLLAIQVDSYREFLQENVDPAKRTDHGLHAALKSVFPIASYSGNAALEYVGYKLGEPVFDERECRQRGMSYGAPLRVTVRLVIYDRESSTKAIKYVKEQEVYLGEIPLMTENGTFIVNGTERVIVSQLHRSPGVFFDHDRGKTHSSGKLLYSARIIPYRGSWLDFEFDPKDALFTRIDRRRKLPVSILLRALGYSNEEMLAEFFEINTFHINPDEGVQLELVPERLRGETLGFDLADGDKVIVEAGKRITARHIKQLEASGIAALAVPDDYIVGRILSHDVVDASTGELLAQANDEITDEQLQAFRKAGVDAVGTLWVNDLDRGPYLSNTLRIDPTKTQLEALVEIYRMMRPGEPPTKDAAQNLFHNLFFTFERYDLSAVGRMKFNRRVGRKETTGEAVLYDSKYFGERNDEESKRLVAAHGDSSDILDVIKVLTEIRNGRGVVDDIDHLGNRRVRSVGEMAENVFRVGLVRVERAVKERLSMAESEGLTPQELINAKPVAAAIKEFFGSSQLSQFMDQNNPLSEVTHKRRVSALGPGGLTRERAGFEVRDVHPTHYGRVCTIETPEGPNIGLINSLAVYARTNQYGFLETPYRKVVDGKVYDEVEFLSAIEENEYVIAQANALTDAKGTLTEQFVPCRFQGESLLKPPAEVHFMDVSPMQTVSIAAALVPFLEHDDANRALMGANMQRQAVPTLRAQKPLVGTGIERAVARDSGVTVNARRGGEIVQIDAARIVVKVNEEEIVGATDAGVDIYNLVKYTRSNQNTCINQRPLVQVGDVIARGDVLADGPSTDIGELALGQNMLIAFMPWNGYNFEDSILLSERVVEEDRYTTIHIEELTCVARDTKLGPEEISADIPNVSEQALNRLDESGVVYIGAEVRAGDIMVGKVTPKGESQLTPEEKLLRAIFGEKASDVKDSSLRVPPGMDGTVIDVQVFTRDGIEKDKRARQIEESEIKRVKKDFDDQFRILEAAIYMRLRSQIVGKVVNGGAGLKKGDVITDAFLDGLKKADWFALRMKDEDASEAIERAQKQIQAHEKEFERRFADKRGKITAGDDLAPGVLKMVKVFLAVKRRIQPGDKMAGRHGNKGVVSNVVPVEDMPYMASGETVDIVLNPLGVPSRMNIGQILEVHLGWAAKGLGRKIQAMMEAQAAVADLRKFLDDIYNHDDTNVANRVDLSQFSDEELLRLARNLTDGVPMATPVFDGATEAEIKRMLELADLPSSGQTQLYDGRTGEAFDRHTTVGYMHYLKLNHLVDDKMHARSTGPYSLVTQQPLGGKAQFGGQRFGEMEVWALEAYGAAYTLQEMLTVKSDDVQGRNQMYKNIVDGEHEMVAGMPESFNVLVKEIRSLAINMELEDN.

This sequence belongs to the RNA polymerase beta chain family. As to quaternary structure, the RNAP catalytic core consists of 2 alpha, 1 beta, 1 beta' and 1 omega subunit. When a sigma factor is associated with the core the holoenzyme is formed, which can initiate transcription.

The catalysed reaction is RNA(n) + a ribonucleoside 5'-triphosphate = RNA(n+1) + diphosphate. Functionally, DNA-dependent RNA polymerase catalyzes the transcription of DNA into RNA using the four ribonucleoside triphosphates as substrates. The protein is DNA-directed RNA polymerase subunit beta of Stenotrophomonas maltophilia (strain K279a).